The sequence spans 504 residues: Ribose import ATP-binding protein RbsA 3 (504 aa).

ABC transporter domains are found at residues 6–238 and 251–494; these read ANLK…VGRP and IGAE…MMGG. ATP is bound at residue 38–45; sequence GENGAGKS.

The protein belongs to the ABC transporter superfamily. Ribose importer (TC 3.A.1.2.1) family. The complex is composed of an ATP-binding protein (RbsA), two transmembrane proteins (RbsC) and a solute-binding protein (RbsB).

The protein resides in the cell inner membrane. The catalysed reaction is D-ribose(out) + ATP + H2O = D-ribose(in) + ADP + phosphate + H(+). Functionally, part of the ABC transporter complex RbsABC involved in ribose import. Responsible for energy coupling to the transport system. The chain is Ribose import ATP-binding protein RbsA 3 from Rhizobium meliloti (strain 1021) (Ensifer meliloti).